Here is a 141-residue protein sequence, read N- to C-terminus: D-aminoacyl-tRNA deacylase (141 aa).

Positions 133–134 match the Gly-cisPro motif, important for rejection of L-amino acids motif; that stretch reads GP.

This sequence belongs to the DTD family. In terms of assembly, homodimer.

The protein resides in the cytoplasm. The enzyme catalyses glycyl-tRNA(Ala) + H2O = tRNA(Ala) + glycine + H(+). It carries out the reaction a D-aminoacyl-tRNA + H2O = a tRNA + a D-alpha-amino acid + H(+). Its function is as follows. An aminoacyl-tRNA editing enzyme that deacylates mischarged D-aminoacyl-tRNAs. Also deacylates mischarged glycyl-tRNA(Ala), protecting cells against glycine mischarging by AlaRS. Acts via tRNA-based rather than protein-based catalysis; rejects L-amino acids rather than detecting D-amino acids in the active site. By recycling D-aminoacyl-tRNA to D-amino acids and free tRNA molecules, this enzyme counteracts the toxicity associated with the formation of D-aminoacyl-tRNA entities in vivo and helps enforce protein L-homochirality. The protein is D-aminoacyl-tRNA deacylase of Thermobifida fusca (strain YX).